We begin with the raw amino-acid sequence, 362 residues long: Holliday junction branch migration complex subunit RuvB (362 aa).

The interval 1–183 is large ATPase domain (RuvB-L); the sequence is MADSSLVGGG…FGFTGHLEFY (183 aa). Residues leucine 22, arginine 23, glycine 64, lysine 67, threonine 68, threonine 69, 130–132, arginine 173, tyrosine 183, and arginine 220 contribute to the ATP site; that span reads EDF. Threonine 68 provides a ligand contact to Mg(2+). Residues 184–254 are small ATPAse domain (RuvB-S); it reads SVEELELVLR…TASAALDMYE (71 aa). The segment at 257-362 is head domain (RuvB-H); the sequence is KRGLDRLDRS…PVAEWLPNGQ (106 aa). DNA-binding residues include arginine 312 and arginine 317.

It belongs to the RuvB family. As to quaternary structure, homohexamer. Forms an RuvA(8)-RuvB(12)-Holliday junction (HJ) complex. HJ DNA is sandwiched between 2 RuvA tetramers; dsDNA enters through RuvA and exits via RuvB. An RuvB hexamer assembles on each DNA strand where it exits the tetramer. Each RuvB hexamer is contacted by two RuvA subunits (via domain III) on 2 adjacent RuvB subunits; this complex drives branch migration. In the full resolvosome a probable DNA-RuvA(4)-RuvB(12)-RuvC(2) complex forms which resolves the HJ.

It localises to the cytoplasm. The catalysed reaction is ATP + H2O = ADP + phosphate + H(+). Its function is as follows. The RuvA-RuvB-RuvC complex processes Holliday junction (HJ) DNA during genetic recombination and DNA repair, while the RuvA-RuvB complex plays an important role in the rescue of blocked DNA replication forks via replication fork reversal (RFR). RuvA specifically binds to HJ cruciform DNA, conferring on it an open structure. The RuvB hexamer acts as an ATP-dependent pump, pulling dsDNA into and through the RuvAB complex. RuvB forms 2 homohexamers on either side of HJ DNA bound by 1 or 2 RuvA tetramers; 4 subunits per hexamer contact DNA at a time. Coordinated motions by a converter formed by DNA-disengaged RuvB subunits stimulates ATP hydrolysis and nucleotide exchange. Immobilization of the converter enables RuvB to convert the ATP-contained energy into a lever motion, pulling 2 nucleotides of DNA out of the RuvA tetramer per ATP hydrolyzed, thus driving DNA branch migration. The RuvB motors rotate together with the DNA substrate, which together with the progressing nucleotide cycle form the mechanistic basis for DNA recombination by continuous HJ branch migration. Branch migration allows RuvC to scan DNA until it finds its consensus sequence, where it cleaves and resolves cruciform DNA. This chain is Holliday junction branch migration complex subunit RuvB, found in Arthrobacter sp. (strain FB24).